A 219-amino-acid polypeptide reads, in one-letter code: MKFNLIDIEDWNRKPYFEHYLNAVRCTYSMTANIEITGLLREIKLKGLKLYPTLIYIITTVVNRHKEFRTCFDQKGKLGYWDSMNPSYTVFHKDNETFSSIWTEYDENFPRFYYNYLEDIRNYSDVLNFMPKTGEPANTINVSSIPWVNFTGFNLNIYNDATYLIPIFTLGKYFQQDNKILLPMSVQVHHAVCDGYHISRFFNEAQELASNYETWLGEK.

The Proton acceptor role is filled by H190.

The protein belongs to the chloramphenicol acetyltransferase family. Homotrimer.

It catalyses the reaction chloramphenicol + acetyl-CoA = chloramphenicol 3-acetate + CoA. Functionally, this enzyme is an effector of chloramphenicol resistance in bacteria. In Clostridium perfringens, this protein is Chloramphenicol acetyltransferase (catQ).